A 408-amino-acid chain; its full sequence is LL-diaminopimelate aminotransferase (408 aa).

2 residues coordinate substrate: Tyr15 and Gly42. Residues Tyr72, 108–109 (SK), Tyr132, Asn187, Tyr218, and 246–248 (SFS) contribute to the pyridoxal 5'-phosphate site. Lys109, Tyr132, and Asn187 together coordinate substrate. At Lys249 the chain carries N6-(pyridoxal phosphate)lysine. Pyridoxal 5'-phosphate-binding residues include Arg257 and Asn292. Residues Asn292 and Arg388 each contribute to the substrate site.

It belongs to the class-I pyridoxal-phosphate-dependent aminotransferase family. LL-diaminopimelate aminotransferase subfamily. As to quaternary structure, homodimer. Requires pyridoxal 5'-phosphate as cofactor.

It catalyses the reaction (2S,6S)-2,6-diaminopimelate + 2-oxoglutarate = (S)-2,3,4,5-tetrahydrodipicolinate + L-glutamate + H2O + H(+). Its pathway is amino-acid biosynthesis; L-lysine biosynthesis via DAP pathway; LL-2,6-diaminopimelate from (S)-tetrahydrodipicolinate (aminotransferase route): step 1/1. Functionally, involved in the synthesis of meso-diaminopimelate (m-DAP or DL-DAP), required for both lysine and peptidoglycan biosynthesis. Catalyzes the direct conversion of tetrahydrodipicolinate to LL-diaminopimelate. The sequence is that of LL-diaminopimelate aminotransferase from Prochlorococcus marinus (strain MIT 9211).